We begin with the raw amino-acid sequence, 35 residues long: Photosystem II reaction center protein Psb30 (35 aa).

Residues 7–27 traverse the membrane as a helical segment; it reads LIANFGALALITLAGPAVIFI.

Belongs to the Psb30/Ycf12 family. PSII is composed of 1 copy each of membrane proteins PsbA, PsbB, PsbC, PsbD, PsbE, PsbF, PsbH, PsbI, PsbJ, PsbK, PsbL, PsbM, PsbT, PsbX, PsbY, PsbZ, Psb30/Ycf12, peripheral proteins PsbO, CyanoQ (PsbQ), PsbU, PsbV and a large number of cofactors. It forms dimeric complexes.

The protein localises to the cellular thylakoid membrane. Its function is as follows. A core subunit of photosystem II (PSII), probably helps stabilize the reaction center. This Synechococcus sp. (strain CC9311) protein is Photosystem II reaction center protein Psb30.